The chain runs to 294 residues: Elongation factor Ts (294 aa).

The tract at residues 80–83 is involved in Mg(2+) ion dislocation from EF-Tu; the sequence is TDFV.

It belongs to the EF-Ts family.

The protein resides in the cytoplasm. Its function is as follows. Associates with the EF-Tu.GDP complex and induces the exchange of GDP to GTP. It remains bound to the aminoacyl-tRNA.EF-Tu.GTP complex up to the GTP hydrolysis stage on the ribosome. The protein is Elongation factor Ts of Listeria monocytogenes serovar 1/2a (strain ATCC BAA-679 / EGD-e).